The chain runs to 257 residues: High-affinity copper transporter ctrC (257 aa).

Helical transmembrane passes span 79 to 99 (RGMF…LEFL) and 202 to 222 (YFNG…SFIF).

This sequence belongs to the copper transporter (Ctr) (TC 1.A.56) family. SLC31A subfamily.

It is found in the cell membrane. The catalysed reaction is Cu(2+)(in) = Cu(2+)(out). Functionally, high-affinity copper transporter of plasma membrane that mediates copper uptake under low copper conditions. The mechanism driving the transmembrane transport of copper has still to be determined. Acts as a potential virulence factor. In Aspergillus fumigatus (strain ATCC MYA-4609 / CBS 101355 / FGSC A1100 / Af293) (Neosartorya fumigata), this protein is High-affinity copper transporter ctrC.